We begin with the raw amino-acid sequence, 147 residues long: D-aminoacyl-tRNA deacylase (147 aa).

Residues 136-137 (GP) carry the Gly-cisPro motif, important for rejection of L-amino acids motif.

This sequence belongs to the DTD family. In terms of assembly, homodimer.

It localises to the cytoplasm. It carries out the reaction glycyl-tRNA(Ala) + H2O = tRNA(Ala) + glycine + H(+). The enzyme catalyses a D-aminoacyl-tRNA + H2O = a tRNA + a D-alpha-amino acid + H(+). Functionally, an aminoacyl-tRNA editing enzyme that deacylates mischarged D-aminoacyl-tRNAs. Also deacylates mischarged glycyl-tRNA(Ala), protecting cells against glycine mischarging by AlaRS. Acts via tRNA-based rather than protein-based catalysis; rejects L-amino acids rather than detecting D-amino acids in the active site. By recycling D-aminoacyl-tRNA to D-amino acids and free tRNA molecules, this enzyme counteracts the toxicity associated with the formation of D-aminoacyl-tRNA entities in vivo and helps enforce protein L-homochirality. The polypeptide is D-aminoacyl-tRNA deacylase (Streptococcus suis (strain 98HAH33)).